A 276-amino-acid chain; its full sequence is Putative respiratory nitrate reductase heme subunit ORF7 (276 aa).

Heme b contacts are provided by methionine 138 and lysine 228.

Probable multiprotein complex; a catalytic heterodimer of an alpha and beta chain is proposed to associate with additional subunits involved in membrane attachment and electron transfer. Requires heme b as cofactor.

The protein resides in the cell membrane. In terms of biological role, the respiratory membrane-bound nitrate reductase enzyme complex plays a role in generation of metabolic energy by using nitrate as a terminal electron acceptor during anaerobic conditions. May transfer electrons to the iron-sulfur centers of the catalytic beta subunit. The polypeptide is Putative respiratory nitrate reductase heme subunit ORF7 (Haloferax mediterranei (strain ATCC 33500 / DSM 1411 / JCM 8866 / NBRC 14739 / NCIMB 2177 / R-4) (Halobacterium mediterranei)).